Reading from the N-terminus, the 234-residue chain is 1-(5-phosphoribosyl)-5-[(5-phosphoribosylamino)methylideneamino] imidazole-4-carboxamide isomerase (234 aa).

The Proton acceptor role is filled by Asp-9. The Proton donor role is filled by Asp-131.

The protein belongs to the HisA/HisF family.

The protein localises to the cytoplasm. It carries out the reaction 1-(5-phospho-beta-D-ribosyl)-5-[(5-phospho-beta-D-ribosylamino)methylideneamino]imidazole-4-carboxamide = 5-[(5-phospho-1-deoxy-D-ribulos-1-ylimino)methylamino]-1-(5-phospho-beta-D-ribosyl)imidazole-4-carboxamide. It functions in the pathway amino-acid biosynthesis; L-histidine biosynthesis; L-histidine from 5-phospho-alpha-D-ribose 1-diphosphate: step 4/9. This is 1-(5-phosphoribosyl)-5-[(5-phosphoribosylamino)methylideneamino] imidazole-4-carboxamide isomerase from Staphylococcus saprophyticus subsp. saprophyticus (strain ATCC 15305 / DSM 20229 / NCIMB 8711 / NCTC 7292 / S-41).